Consider the following 256-residue polypeptide: Homeobox protein ceh-34 (256 aa).

A DNA-binding region (homeobox) is located at residues 134 to 193; it reads GEETNYCFKSKSRNVLRDAYKKCQYPSVEDKRRLAQQTELSIIQVSNWFKNKRQRERAAG. A disordered region spans residues 187 to 233; it reads QRERAAGQLDRSSARSNDSDDGSSGCESKPPMNIDSPAPPPLPTSFD.

This sequence belongs to the SIX/Sine oculis homeobox family. Interacts (via N-terminus) with eya-1 (via C-terminus). As to expression, shows expression only in the pharyngeal nervous system.

It is found in the nucleus. Acts as a transcription regulator. Binds to the sequence motif 5'-TCAGGTT-3'. Binds to the cis-regulatory element of proapoptotic factor egl-1 gene and together with eya-1 activates egl-1 expression to promote motor neuron M4 sister cell apoptosis. Also promotes apoptosis of I1 pharyngeal neuron sister cell. Together with eya-1, required to specify the coelomocyte fate in embryonic and postembryonic precursors. Required to establish and maintain the differentiation of all 14 classes of pharyngeal neurons. Controls the neurotransmitter signaling capacity of the neurons and is required for the expression of some neurotransmitter receptors including mgl-1, glr-2 and ser-7. Affects the neuropeptidergic identity of pharyngeal neurons. Required for the pharyngeal expression of sensory receptors gur-3, glu-7 and str-97, antimicrobial defense genes such as spp-12, gpla-1/flr-2 and htrl-1, and pan-pharyngeal nervous system genes such as kin-36. Required to establish and maintain pharyngeal nervous system architecture by ensuring correct axon and synapse organization. Required for expression of eya-1 which may act as a transcriptional cofactor to specify distinct pharyngeal neuron types. Cooperates with several homeobox proteins to specify distinct pharyngeal neuron types including unc-86 in the NSM and I1 neurons, ceh-14 in the I2 neuron, ceh-2 and pros-1 in the I3 neuron, ceh-45 in the M1 neuron, ceh-2 in the M3 neuron, ceh-28 and zag-1 in the M4 neuron, and vab-15 in the M5 neuron. The sequence is that of Homeobox protein ceh-34 (ceh-34) from Caenorhabditis elegans.